A 396-amino-acid chain; its full sequence is Argininosuccinate synthase (396 aa).

ATP is bound by residues 10 to 18 and A37; that span reads AYSGGLDTS. Y88 and S93 together coordinate L-citrulline. G118 provides a ligand contact to ATP. Positions 120, 124, and 125 each coordinate L-aspartate. Residue N124 participates in L-citrulline binding. The L-citrulline site is built by R128, S176, S185, E261, and Y273.

This sequence belongs to the argininosuccinate synthase family. Type 1 subfamily. As to quaternary structure, homotetramer.

The protein localises to the cytoplasm. It catalyses the reaction L-citrulline + L-aspartate + ATP = 2-(N(omega)-L-arginino)succinate + AMP + diphosphate + H(+). Its pathway is amino-acid biosynthesis; L-arginine biosynthesis; L-arginine from L-ornithine and carbamoyl phosphate: step 2/3. The protein is Argininosuccinate synthase of Nitratidesulfovibrio vulgaris (strain ATCC 29579 / DSM 644 / CCUG 34227 / NCIMB 8303 / VKM B-1760 / Hildenborough) (Desulfovibrio vulgaris).